The sequence spans 306 residues: Acetylglutamate kinase (306 aa).

Substrate contacts are provided by residues 68–69, Arg90, and Asn195; that span reads GG.

This sequence belongs to the acetylglutamate kinase family. ArgB subfamily.

It localises to the cytoplasm. The enzyme catalyses N-acetyl-L-glutamate + ATP = N-acetyl-L-glutamyl 5-phosphate + ADP. It functions in the pathway amino-acid biosynthesis; L-arginine biosynthesis; N(2)-acetyl-L-ornithine from L-glutamate: step 2/4. Catalyzes the ATP-dependent phosphorylation of N-acetyl-L-glutamate. The sequence is that of Acetylglutamate kinase from Chromohalobacter salexigens (strain ATCC BAA-138 / DSM 3043 / CIP 106854 / NCIMB 13768 / 1H11).